The following is a 106-amino-acid chain: Large ribosomal subunit protein eL42 (106 aa).

This sequence belongs to the eukaryotic ribosomal protein eL42 family.

In Yarrowia lipolytica (strain CLIB 122 / E 150) (Yeast), this protein is Large ribosomal subunit protein eL42 (RPL44).